Here is a 420-residue protein sequence, read N- to C-terminus: L-rhamnose isomerase (420 aa).

Mn(2+)-binding residues include histidine 264, aspartate 296, and aspartate 298.

This sequence belongs to the rhamnose isomerase family. It depends on Mn(2+) as a cofactor.

It localises to the cytoplasm. The catalysed reaction is L-rhamnopyranose = L-rhamnulose. Its pathway is carbohydrate degradation; L-rhamnose degradation; glycerone phosphate from L-rhamnose: step 1/3. Its function is as follows. Catalyzes the interconversion of L-rhamnose and L-rhamnulose. In Listeria monocytogenes serovar 1/2a (strain ATCC BAA-679 / EGD-e), this protein is L-rhamnose isomerase.